The primary structure comprises 245 residues: Isopentenyl phosphate kinase (245 aa).

Residue 5-9 (KIGGS) participates in ATP binding. A substrate-binding site is contributed by Gly45. Gly46 serves as a coordination point for ATP. Residues His50 and Gly143 each coordinate substrate. Residues Asp164, 169–174 (YSKDPK), Gly201, and Lys205 contribute to the ATP site.

The protein belongs to the isopentenyl phosphate kinase family. As to quaternary structure, homodimer.

It catalyses the reaction isopentenyl phosphate + ATP = isopentenyl diphosphate + ADP. Its function is as follows. Catalyzes the formation of isopentenyl diphosphate (IPP), the building block of all isoprenoids. Has lower activity with isopentenyl thiolophosphate (ISP). Has low activity with dimethylallyl phosphate (DMAP), 1-butyl phosphate (BP) and 3-buten-1-yl phosphate (BEP). Has no significant activity with geranyl phosphate (in vitro). The chain is Isopentenyl phosphate kinase from Thermoplasma acidophilum (strain ATCC 25905 / DSM 1728 / JCM 9062 / NBRC 15155 / AMRC-C165).